We begin with the raw amino-acid sequence, 153 residues long: UPF0178 protein Ccel_2994 (153 aa).

This sequence belongs to the UPF0178 family.

The polypeptide is UPF0178 protein Ccel_2994 (Ruminiclostridium cellulolyticum (strain ATCC 35319 / DSM 5812 / JCM 6584 / H10) (Clostridium cellulolyticum)).